We begin with the raw amino-acid sequence, 931 residues long: Translation initiation factor IF-2 (931 aa).

The tract at residues 32–310 (KSASSTVEPP…SSKARKNRLA (279 aa)) is disordered. Positions 50–59 (FASSGQGNAS) are enriched in polar residues. Residues 82-96 (PAAPSAPKPAAPAAP) show a composition bias toward pro residues. A compositionally biased stretch (low complexity) spans 156-168 (GNAPQGGNNANGA). Composition is skewed to gly residues over residues 217–238 (RPGQ…GGAK), 248–271 (GQGG…GFQG), and 281–298 (ARGG…GRQG). A tr-type G domain is found at 424-596 (PRPPVVTVMG…VLLTADAELD (173 aa)). The G1 stretch occupies residues 433–440 (GHVDHGKT). 433–440 (GHVDHGKT) is a binding site for GTP. Positions 458–462 (GITQR) are G2. A G3 region spans residues 483 to 486 (DTPG). Residues 483-487 (DTPGH) and 537-540 (NKID) contribute to the GTP site. The segment at 537–540 (NKID) is G4. The G5 stretch occupies residues 573–575 (SAK).

It belongs to the TRAFAC class translation factor GTPase superfamily. Classic translation factor GTPase family. IF-2 subfamily.

The protein localises to the cytoplasm. Functionally, one of the essential components for the initiation of protein synthesis. Protects formylmethionyl-tRNA from spontaneous hydrolysis and promotes its binding to the 30S ribosomal subunits. Also involved in the hydrolysis of GTP during the formation of the 70S ribosomal complex. This chain is Translation initiation factor IF-2, found in Bifidobacterium adolescentis (strain ATCC 15703 / DSM 20083 / NCTC 11814 / E194a).